A 92-amino-acid chain; its full sequence is UPF0358 protein SH1840 (92 aa).

It belongs to the UPF0358 family.

The sequence is that of UPF0358 protein SH1840 from Staphylococcus haemolyticus (strain JCSC1435).